A 502-amino-acid chain; its full sequence is ATP synthase subunit alpha (502 aa).

169-176 serves as a coordination point for ATP; that stretch reads GDRQTGKT.

Belongs to the ATPase alpha/beta chains family. In terms of assembly, F-type ATPases have 2 components, CF(1) - the catalytic core - and CF(0) - the membrane proton channel. CF(1) has five subunits: alpha(3), beta(3), gamma(1), delta(1), epsilon(1). CF(0) has three main subunits: a(1), b(2) and c(9-12). The alpha and beta chains form an alternating ring which encloses part of the gamma chain. CF(1) is attached to CF(0) by a central stalk formed by the gamma and epsilon chains, while a peripheral stalk is formed by the delta and b chains.

It localises to the cell inner membrane. The enzyme catalyses ATP + H2O + 4 H(+)(in) = ADP + phosphate + 5 H(+)(out). Its function is as follows. Produces ATP from ADP in the presence of a proton gradient across the membrane. The alpha chain is a regulatory subunit. The protein is ATP synthase subunit alpha of Nitratidesulfovibrio vulgaris (strain DSM 19637 / Miyazaki F) (Desulfovibrio vulgaris).